A 172-amino-acid polypeptide reads, in one-letter code: MERAIQGNDAREQANSERWDGGSGGTTSPFKLPDESPSWTEWRLHNDETNSNQDNPLGFKESWGFGKVVFKRYLRYDRTEASLHRVLGSWTGDSVNYAASRFFGFDQIGCTYSIRFRGVSITVSGGSRTLQHLCEMAIRSKQELLQLAPIEVESNVSRGCPEGTQTFEKEGE.

The span at 1 to 20 shows a compositional bias: basic and acidic residues; the sequence is MERAIQGNDAREQANSERWD. Positions 1-37 are disordered; the sequence is MERAIQGNDAREQANSERWDGGSGGTTSPFKLPDESP.

This sequence belongs to the tombusvirus protein p19 family. Homodimer.

Its function is as follows. Viral suppressor of RNA silencing which binds specifically to silencing RNAs (siRNAs). Acts as a molecular caliper to specifically select siRNAs based on the length of the duplex region of the RNA. The sequence is that of RNA silencing suppressor p19 from Tomato bushy stunt virus (strain Ja6) (TBSV).